Here is a 637-residue protein sequence, read N- to C-terminus: tRNA uridine 5-carboxymethylaminomethyl modification enzyme MnmG (637 aa).

FAD contacts are provided by residues 15-20 (GAGHAG), isoleucine 127, and serine 182. 276–290 (GPRYCPSIEDKIVRF) is an NAD(+) binding site. Glutamine 373 is a binding site for FAD.

Belongs to the MnmG family. Homodimer. Heterotetramer of two MnmE and two MnmG subunits. The cofactor is FAD.

The protein resides in the cytoplasm. In terms of biological role, NAD-binding protein involved in the addition of a carboxymethylaminomethyl (cmnm) group at the wobble position (U34) of certain tRNAs, forming tRNA-cmnm(5)s(2)U34. In Streptococcus pneumoniae (strain Hungary19A-6), this protein is tRNA uridine 5-carboxymethylaminomethyl modification enzyme MnmG.